The chain runs to 147 residues: Protein-export protein SecB 2 (147 aa).

Belongs to the SecB family. Homotetramer, a dimer of dimers. One homotetramer interacts with 1 SecA dimer.

It localises to the cytoplasm. In terms of biological role, one of the proteins required for the normal export of preproteins out of the cell cytoplasm. It is a molecular chaperone that binds to a subset of precursor proteins, maintaining them in a translocation-competent state. It also specifically binds to its receptor SecA. In Francisella tularensis subsp. holarctica (strain FTNF002-00 / FTA), this protein is Protein-export protein SecB 2.